Here is a 350-residue protein sequence, read N- to C-terminus: [LysW]-L-2-aminoadipate/[LysW]-L-glutamate phosphate reductase (350 aa).

10–13 (SGYT) lines the NADP(+) pocket. Cys150 is an active-site residue. Position 317 (Asn317) interacts with NADP(+).

The protein belongs to the NAGSA dehydrogenase family. Type 1 subfamily. LysY sub-subfamily.

The protein localises to the cytoplasm. The enzyme catalyses [amino-group carrier protein]-C-terminal-N-(1-carboxy-5-oxopentan-1-yl)-L-glutamine + phosphate + NADP(+) = [amino-group carrier protein]-C-terminal-N-(1-carboxy-5-phosphooxy-5-oxopentan-1-yl)-L-glutamine + NADPH + H(+). It carries out the reaction [amino-group carrier protein]-C-terminal-gamma-(L-glutamyl-5-semialdehyde)-L-glutamate + phosphate + NADP(+) = [amino-group carrier protein]-C-terminal-gamma-(5-phospho-L-glutamyl)-L-glutamate + NADPH + H(+). The protein operates within amino-acid biosynthesis; L-lysine biosynthesis via AAA pathway; L-lysine from L-alpha-aminoadipate (Thermus route): step 3/5. It participates in amino-acid biosynthesis; L-arginine biosynthesis. Involved in both the arginine and lysine biosynthetic pathways. The protein is [LysW]-L-2-aminoadipate/[LysW]-L-glutamate phosphate reductase of Sulfolobus acidocaldarius (strain ATCC 33909 / DSM 639 / JCM 8929 / NBRC 15157 / NCIMB 11770).